A 29-amino-acid polypeptide reads, in one-letter code: Dermaseptin-J5 (29 aa).

Valine amide is present on Val29.

Expressed by the skin glands.

Its subcellular location is the secreted. Has antimicrobial activity. This Phasmahyla jandaia (Jandaia leaf frog) protein is Dermaseptin-J5.